A 932-amino-acid polypeptide reads, in one-letter code: Isoleucine--tRNA ligase (932 aa).

Residues 58–68 carry the 'HIGH' region motif; it reads PYANGDIHIGH. Position 570 (E570) interacts with L-isoleucyl-5'-AMP. Positions 611–615 match the 'KMSKS' region motif; sequence KMSKS. K614 is an ATP binding site. Zn(2+)-binding residues include C895, C898, C915, and C918.

The protein belongs to the class-I aminoacyl-tRNA synthetase family. IleS type 1 subfamily. Monomer. The cofactor is Zn(2+).

Its subcellular location is the cytoplasm. The catalysed reaction is tRNA(Ile) + L-isoleucine + ATP = L-isoleucyl-tRNA(Ile) + AMP + diphosphate. Functionally, catalyzes the attachment of isoleucine to tRNA(Ile). As IleRS can inadvertently accommodate and process structurally similar amino acids such as valine, to avoid such errors it has two additional distinct tRNA(Ile)-dependent editing activities. One activity is designated as 'pretransfer' editing and involves the hydrolysis of activated Val-AMP. The other activity is designated 'posttransfer' editing and involves deacylation of mischarged Val-tRNA(Ile). The sequence is that of Isoleucine--tRNA ligase from Dechloromonas aromatica (strain RCB).